The primary structure comprises 130 residues: Ribonuclease P protein component (130 aa).

This sequence belongs to the RnpA family. As to quaternary structure, consists of a catalytic RNA component (M1 or rnpB) and a protein subunit.

The catalysed reaction is Endonucleolytic cleavage of RNA, removing 5'-extranucleotides from tRNA precursor.. Its function is as follows. RNaseP catalyzes the removal of the 5'-leader sequence from pre-tRNA to produce the mature 5'-terminus. It can also cleave other RNA substrates such as 4.5S RNA. The protein component plays an auxiliary but essential role in vivo by binding to the 5'-leader sequence and broadening the substrate specificity of the ribozyme. This Azotobacter vinelandii (strain DJ / ATCC BAA-1303) protein is Ribonuclease P protein component.